The primary structure comprises 224 residues: Glycerol-3-phosphate acyltransferase (224 aa).

6 helical membrane-spanning segments follow: residues 4–24, 60–80, 88–108, 124–144, 149–169, and 182–202; these read FVIV…GSIN, LVIF…VYFV, SVVV…FPIW, IISV…LIII, IVSF…FIPW, and WPWW…IWSH.

Belongs to the PlsY family. As to quaternary structure, probably interacts with PlsX.

The protein resides in the cell membrane. It catalyses the reaction an acyl phosphate + sn-glycerol 3-phosphate = a 1-acyl-sn-glycero-3-phosphate + phosphate. It participates in lipid metabolism; phospholipid metabolism. Functionally, catalyzes the transfer of an acyl group from acyl-phosphate (acyl-PO(4)) to glycerol-3-phosphate (G3P) to form lysophosphatidic acid (LPA). This enzyme utilizes acyl-phosphate as fatty acyl donor, but not acyl-CoA or acyl-ACP. This is Glycerol-3-phosphate acyltransferase from Mycoplasmopsis pulmonis (strain UAB CTIP) (Mycoplasma pulmonis).